We begin with the raw amino-acid sequence, 155 residues long: Aspartate carbamoyltransferase regulatory chain (155 aa).

Zn(2+) is bound by residues C112, C117, C140, and C143.

The protein belongs to the PyrI family. As to quaternary structure, contains catalytic and regulatory chains. Zn(2+) is required as a cofactor.

In terms of biological role, involved in allosteric regulation of aspartate carbamoyltransferase. The protein is Aspartate carbamoyltransferase regulatory chain of Phocaeicola vulgatus (strain ATCC 8482 / DSM 1447 / JCM 5826 / CCUG 4940 / NBRC 14291 / NCTC 11154) (Bacteroides vulgatus).